Reading from the N-terminus, the 88-residue chain is Apolipoprotein C-I (88 aa).

An N-terminal signal peptide occupies residues 1–26; that stretch reads MRLFIALPVLIVVVAMALEGPAPAQA.

The protein belongs to the apolipoprotein C1 family.

The protein localises to the secreted. Its function is as follows. Inhibitor of lipoprotein binding to the low density lipoprotein (LDL) receptor, LDL receptor-related protein, and very low density lipoprotein (VLDL) receptor. Associates with high density lipoproteins (HDL) and the triacylglycerol-rich lipoproteins in the plasma and makes up about 10% of the protein of the VLDL and 2% of that of HDL. Appears to interfere directly with fatty acid uptake and is also the major plasma inhibitor of cholesteryl ester transfer protein (CETP). Binds free fatty acids and reduces their intracellular esterification. Modulates the interaction of APOE with beta-migrating VLDL and inhibits binding of beta-VLDL to the LDL receptor-related protein. The sequence is that of Apolipoprotein C-I (Apoc1) from Rattus norvegicus (Rat).